An 86-amino-acid chain; its full sequence is Cell division topological specificity factor (86 aa).

It belongs to the MinE family.

Functionally, prevents the cell division inhibition by proteins MinC and MinD at internal division sites while permitting inhibition at polar sites. This ensures cell division at the proper site by restricting the formation of a division septum at the midpoint of the long axis of the cell. The chain is Cell division topological specificity factor from Shewanella halifaxensis (strain HAW-EB4).